Here is a 319-residue protein sequence, read N- to C-terminus: G-protein coupled receptor 171 (319 aa).

At 1–21 (MTNSSTFCPVYRDLEPFTYFF) the chain is on the extracellular side. A glycan (N-linked (GlcNAc...) asparagine) is linked at asparagine 3. Residues 22-42 (YLVFLIGIIGSCFATWAFIQK) form a helical membrane-spanning segment. Topologically, residues 43–48 (NTNHRC) are cytoplasmic. A helical membrane pass occupies residues 49–69 (VSIYLINLLTADFLLTLALPV). Residues 70-89 (KITVDLGVAPWKLRIFHCQV) lie on the Extracellular side of the membrane. A helical membrane pass occupies residues 90-110 (TACLIYINMYLSIIFLAFVSI). Topologically, residues 111–132 (DRCLQLTYSCKIYRIQEPGFAK) are cytoplasmic. Residues 133–153 (MISAVVWLMVLLIMVPNMIIP) traverse the membrane as a helical segment. Residues 154 to 181 (IKDIKEKPNVGCMEFKSEFGRNWHLLTN) are Extracellular-facing. A helical transmembrane segment spans residues 182–202 (FISIAIFFNFSAIILISNCLV). Topologically, residues 203–224 (IRQLYRNKDNENYPNVKRALIS) are cytoplasmic. The chain crosses the membrane as a helical span at residues 225 to 245 (ILLVTTGYIICFVPYHIVRIP). The Extracellular portion of the chain corresponds to 246–268 (YTLSQTEVISDCSTRISLFKAKE). Residues 269–289 (ATLLLAVSNLCFDPILYYHLS) traverse the membrane as a helical segment. Over 290 to 319 (KAFRLKITETFASHKESKAQKEKPRSENNA) the chain is Cytoplasmic.

It belongs to the G-protein coupled receptor 1 family.

It is found in the cell membrane. Functionally, G-protein coupled receptor for Big LEN, a 16-amino acid neuropeptide produced from the precursor protein, proSAAS (encoded by PCSK1N). Acts through a G(i)-alpha-mediated pathway in response to bigLEN. Big LEN-GPR171 system plays an important role in regulating feeding and metabolism. Also plays a role in modulating fear and anxiety-like behaviors in the basolateral amygdala. Big LEN-GPR171 modulates the mu-type opioid receptor signaling and antinociception. Acts as a negative regulator T cell function. This Bos taurus (Bovine) protein is G-protein coupled receptor 171 (GPR171).